Consider the following 118-residue polypeptide: D-dopachrome decarboxylase (118 aa).

Proline 2 is modified (N-acetylproline). Position 33 is an N6-acetyllysine (lysine 33). Serine 90 is modified (phosphoserine).

The protein belongs to the MIF family. In terms of assembly, homotrimer.

Its subcellular location is the cytoplasm. It carries out the reaction D-dopachrome + H(+) = 5,6-dihydroxyindole + CO2. In terms of biological role, tautomerization of D-dopachrome with decarboxylation to give 5,6-dihydroxyindole (DHI). The chain is D-dopachrome decarboxylase (Ddt) from Mus musculus (Mouse).